We begin with the raw amino-acid sequence, 271 residues long: tRNA (guanine-N(1)-)-methyltransferase (271 aa).

Residues G120 and 145-150 (IGDYVL) each bind S-adenosyl-L-methionine.

The protein belongs to the RNA methyltransferase TrmD family. As to quaternary structure, homodimer.

The protein resides in the cytoplasm. The catalysed reaction is guanosine(37) in tRNA + S-adenosyl-L-methionine = N(1)-methylguanosine(37) in tRNA + S-adenosyl-L-homocysteine + H(+). Functionally, specifically methylates guanosine-37 in various tRNAs. The chain is tRNA (guanine-N(1)-)-methyltransferase from Bifidobacterium longum (strain NCC 2705).